Reading from the N-terminus, the 294-residue chain is MNDIKQLLWNGELNVLVSIDPSFLMKGSPREIAVLRIRVPRETYLVNYMPFIWNKIKSFLSFDPLTDSEKYFWFEHNKTPIPWNYPVGVLFDCLAGKSATFTTSFENQVKDVLTFLRIHLVMGDSLPPTIIPIASSKTQAEKFWFHQWKQVCFILNGSSKAIMSLSVNEARKFWGSVITRNFQDFIEISNKISSSRPRHIPLIIQTSRTSGTFRISQPTISMTGVNPTLKDIEGDILDVKEGINGNDVMVICQGIEIPWHMLLYDLYSKLRSFDGFLYITLVPIKGGDKASSEL.

Residue K149 forms a Glycyl lysine isopeptide (Lys-Gly) (interchain with G-Cter in ATG12) linkage.

This sequence belongs to the ATG5 family. As to quaternary structure, conjugated with ATG12. The ATG5-ATG12 conjugate forms a complex with several units of ATG16. The ATG12-ATG5 conjugate also associates with ATG3. In terms of processing, conjugated to ATG12; which is essential for autophagy. Conjugation with ATG12 involves ATG7 as an E1-like activating enzyme and ATG10 as an E2-like conjugating enzyme.

It is found in the preautophagosomal structure membrane. Its function is as follows. Involved in cytoplasm to vacuole transport (Cvt) and autophagic vesicle formation. Autophagy is essential for maintenance of amino acid levels and protein synthesis under nitrogen starvation. Required for selective autophagic degradation of the nucleus (nucleophagy). Also required for mitophagy, which eliminates defective or superfluous mitochondria in order to fulfill cellular energy requirements and prevent excess ROS production. Conjugation with ATG12, through a ubiquitin-like conjugating system involving ATG7 as an E1-like activating enzyme and ATG10 as an E2-like conjugating enzyme, is essential for its function. The ATG12-ATG5 conjugate acts as an E3-like enzyme which is required for lipidation of ATG8 and ATG8 association to the vesicle membranes. ATG12-ATG5 rearranges the ATG3 catalytic center and enhances its E2 activity. Plays a role in the regulation of filamentous growth and chronological longevity. This Saccharomyces cerevisiae (strain YJM789) (Baker's yeast) protein is Autophagy protein 5 (ATG5).